We begin with the raw amino-acid sequence, 445 residues long: Xylose isomerase (445 aa).

Active-site residues include His-99 and Asp-102. Mg(2+) contacts are provided by Glu-230, Glu-266, His-269, Asp-294, Asp-305, Asp-307, and Asp-337.

This sequence belongs to the xylose isomerase family. As to quaternary structure, homotetramer. Mg(2+) is required as a cofactor.

The protein resides in the cytoplasm. The enzyme catalyses alpha-D-xylose = alpha-D-xylulofuranose. The chain is Xylose isomerase from Geobacillus kaustophilus (strain HTA426).